We begin with the raw amino-acid sequence, 81 residues long: Photosystem I iron-sulfur center (81 aa).

2 4Fe-4S ferredoxin-type domains span residues S2 to W31 and I39 to Y68. [4Fe-4S] cluster-binding residues include C11, C14, C17, C21, C48, C51, C54, and C58.

In terms of assembly, the eukaryotic PSI reaction center is composed of at least 11 subunits. [4Fe-4S] cluster is required as a cofactor.

It localises to the plastid thylakoid membrane. It carries out the reaction reduced [plastocyanin] + hnu + oxidized [2Fe-2S]-[ferredoxin] = oxidized [plastocyanin] + reduced [2Fe-2S]-[ferredoxin]. In terms of biological role, apoprotein for the two 4Fe-4S centers FA and FB of photosystem I (PSI); essential for photochemical activity. FB is the terminal electron acceptor of PSI, donating electrons to ferredoxin. The C-terminus interacts with PsaA/B/D and helps assemble the protein into the PSI complex. Required for binding of PsaD and PsaE to PSI. PSI is a plastocyanin-ferredoxin oxidoreductase, converting photonic excitation into a charge separation, which transfers an electron from the donor P700 chlorophyll pair to the spectroscopically characterized acceptors A0, A1, FX, FA and FB in turn. The protein is Photosystem I iron-sulfur center of Cuscuta reflexa (Southern Asian dodder).